Here is an 81-residue protein sequence, read N- to C-terminus: Protein Vpu (81 aa).

The Extracellular portion of the chain corresponds to 1–7 (MQPLVIA). The chain crosses the membrane as a helical span at residues 8-28 (AIVALVVAGIIAIVVWSIVFI). Topologically, residues 29–81 (EYRKIRRQRKIDKLIDRISERAEDSGNESEGDQEELSALVGMGHDAPWVINDL) are cytoplasmic. Residues serine 53 and serine 57 each carry the phosphoserine; by host CK2 modification.

The protein belongs to the HIV-1 VPU protein family. Homopentamer. Interacts with host CD4 and BRTC; these interactions induce proteasomal degradation of CD4. Interacts with host BST2; this interaction leads to the degradation of host BST2. Interacts with host FBXW11. Interacts with host AP1M1; this interaction plays a role in the mistrafficking and subsequent degradation of host BST2. Interacts with host RANBP2; this interaction allows Vpu to down-regulate host BLM sumoylation. Phosphorylated by host CK2. This phosphorylation is necessary for interaction with human BTRC and degradation of CD4.

The protein resides in the host membrane. With respect to regulation, ion channel activity is inhibited by hexamethylene amiloride in vitro. Its function is as follows. Enhances virion budding by targeting host CD4 and Tetherin/BST2 to proteasome degradation. Degradation of CD4 prevents any unwanted premature interactions between viral Env and its host receptor CD4 in the endoplasmic reticulum. Degradation of antiretroviral protein Tetherin/BST2 is important for virion budding, as BST2 tethers new viral particles to the host cell membrane. Mechanistically, Vpu bridges either CD4 or BST2 to BTRC, a substrate recognition subunit of the Skp1/Cullin/F-box protein E3 ubiquitin ligase, induces their ubiquitination and subsequent proteasomal degradation. The alteration of the E3 ligase specificity by Vpu seems to promote the degradation of host IKBKB, leading to NF-kappa-B down-regulation and subsequent apoptosis. Acts as a viroporin that forms an oligomeric ion channel in membranes. Modulates the host DNA repair mechanisms to promote degradation of nuclear viral cDNA in cells that are already productively infected in order to suppress immune sensing and proviral hyper-integration (superinfection). Manipulates PML-NBs and modulates SUMOylation of host BLM protein thereby enhancing its DNA-end processing activity toward viral unintegrated linear DNA. Also inhibits RAD52-mediated homologous repair of viral cDNA, preventing the generation of dead-end circular forms of single copies of the long terminal repeat and permitting sustained nucleolytic attack. This is Protein Vpu from Homo sapiens (Human).